The following is a 675-amino-acid chain: MADKEAGGSDGPRETAPTSAYSSPARSLGDTGITPLSPSHIVNDTDSNVSEQQSFLVVVAVDFGTTSSGYAYSFTKEPECIHVMRRWEGGDPGVSNQKTPTTILLTPERKFHSFGYAARDFYHDLDPNEAKQWLYLEKFKMKLHTTGDLTMDTDLTAANGKKVKALEIFAYALQYFKEQALKELSDQAGSEFENSDVRWVITVPAIWKQPAKQFMRQAAYQAGLASPENSEQLIIALEPEAASIYCRKLRLHQMIELSSKAAVNGYSGSDTVGAGFTQAKEHIRRNRQSRTFLVENVIGEIWSELEEGDKYVVVDSGGGTVDLTVHQIRLPEGHLKELYKATGGPYGSLGVDYEFEKLLYKIFGEDFIEQFKIKRPAAWVDLMIAFESRKRAAAPDRTNPLNITLPFSFIDYYKKFRGHSVEHALRKSNVDFVKWSSQGMLRMSPDAMNALFKPTIDSIIEHLRDLFQKPEVSTVKFLFLVGGFAEAPLLQQAVQAAFGDQCRIIIPQDVGLTILKGAVLFGLDPAVIKVRRSPLTYGVGVLNRYVEGKHPPEKLLVKDGTRWCTDVFDKFISADQSVALGELVKRSYTPAKPSQLVIVINIYSSEHDNVSFITDPGVKKCGTLRLDLTGTSGTAVPARREIQTLMQFGDTEIKATAIDIATSKSVKVGIDFLNY.

A compositionally biased stretch (basic and acidic residues) spans 1 to 13; sequence MADKEAGGSDGPR. The segment at 1-45 is disordered; sequence MADKEAGGSDGPRETAPTSAYSSPARSLGDTGITPLSPSHIVNDT. Alanine 2 carries the N-acetylalanine modification. 2 stretches are compositionally biased toward polar residues: residues 16–25 and 34–45; these read APTSAYSSPA and TPLSPSHIVNDT.

This sequence belongs to the heat shock protein 70 family. As to quaternary structure, interacts with SORL1 (via cytosolic C-terminus); this interaction affects SORL1 internalization and subcellular localization. As to expression, widely expressed with highest levels in brain, kidney and muscle.

It localises to the cytoplasm. It is found in the nucleus. Its function is as follows. Adapter protein for SORL1, but not SORT1. Delays SORL1 internalization and affects SORL1 subcellular localization. The chain is Heat shock 70 kDa protein 12A (HSPA12A) from Homo sapiens (Human).